A 497-amino-acid chain; its full sequence is Cysteine-rich secretory protein LCCL domain-containing 2 (497 aa).

The signal sequence occupies residues 1–22; sequence MSCVLGGVIPLGLLFLVCGSQG. Residue asparagine 27 is glycosylated (N-linked (GlcNAc...) asparagine). Residues 62–200 form the SCP domain; the sequence is LHNKLRGQVQ…ENAVYFVCNY (139 aa). LCCL domains lie at 284–379 and 385–488; these read MTQV…SSSF and KVQD…RDGK. Disulfide bonds link cysteine 290–cysteine 308, cysteine 312–cysteine 332, cysteine 391–cysteine 413, and cysteine 417–cysteine 440.

Belongs to the CRISP family. Binds to heparin, dermatan sulfate and chondroitin sulfate.

It localises to the secreted. Its function is as follows. Promotes matrix assembly. The chain is Cysteine-rich secretory protein LCCL domain-containing 2 (CRISPLD2) from Homo sapiens (Human).